A 466-amino-acid chain; its full sequence is Ras GTPase-activating protein-binding protein 1 (466 aa).

The NTF2 domain occupies 11–133 (VGREFVRQYY…FYVHNDIFRY (123 aa)). Residues K36, K50, K59, K64, K76, and K123 each participate in a glycyl lysine isopeptide (Lys-Gly) (interchain with G-Cter in ubiquitin) cross-link. The tract at residues 142-225 (VTEPQEESEE…EPVLEETVPE (84 aa)) is acidic disordered region. The residue at position 143 (T143) is a Phosphothreonine. Disordered stretches follow at residues 144 to 172 (EPQE…DSGT) and 184 to 243 (EEHL…QTVQ). Acidic residues-rich tracts occupy residues 145-157 (PQEE…EEPE) and 185-206 (EHLE…EQEP). S149 carries the phosphoserine modification. Residues S231, S232, S250, and S253 each carry the phosphoserine modification. The tract at residues 255-329 (TSKNLPPSGA…REAGEQGDIE (75 aa)) is disordered. Composition is skewed to basic and acidic residues over residues 297–307 (PQRDQRVREQR) and 318–329 (PIREAGEQGDIE). Positions 340–415 (HQLFIGNLPH…VRLNVEEKKT (76 aa)) constitute an RRM domain. Residues K353 and K357 each participate in a glycyl lysine isopeptide (Lys-Gly) (interchain with G-Cter in ubiquitin) cross-link. S373 carries the post-translational modification Phosphoserine. K376 is covalently cross-linked (Glycyl lysine isopeptide (Lys-Gly) (interchain with G-Cter in ubiquitin)). At K376 the chain carries N6-acetyllysine; alternate. A Glycyl lysine isopeptide (Lys-Gly) (interchain with G-Cter in SUMO2); alternate cross-link involves residue K376. A Glycyl lysine isopeptide (Lys-Gly) (interchain with G-Cter in ubiquitin); alternate cross-link involves residue K393. Residues 410–466 (VEEKKTRAAREGDRRDNRLRGPGGPRGGLGGGMRGPPRGGMVQKPGFGVGRGLAPRQ) form an RG-rich region region. Over residues 413 to 428 (KKTRAAREGDRRDNRL) the composition is skewed to basic and acidic residues. Residues 413 to 466 (KKTRAAREGDRRDNRLRGPGGPRGGLGGGMRGPPRGGMVQKPGFGVGRGLAPRQ) form a disordered region. Residue R429 is modified to Asymmetric dimethylarginine. Over residues 430–447 (GPGGPRGGLGGGMRGPPR) the composition is skewed to gly residues. R435 carries the post-translational modification Asymmetric dimethylarginine; alternate. Omega-N-methylarginine; alternate occurs at positions 435, 447, 460, and 465. Dimethylated arginine; alternate is present on R460.

As to quaternary structure, homodimer and oligomer. Component of a TAU mRNP complex, at least composed of IGF2BP1, ELAVL4 and G3BP1. Binds to the SH3 domain of Ras GTPase-activating protein (RASA1) in proliferating cells. No interaction in quiescent cells. Interacts (via NTF2 domain) with USP10; inhibiting stress granule formation by lowering G3BP1 valence. Interacts (via NTF2 domain) with CAPRIN1; promoting stress granule formation by lowering the saturation-concentration of G3BP1. Interacts (via NTF2 domain) with UBAP2L; promoting stress granule formation. Associates (via RG-rich region) with 40S ribosome subunits. Interacts with RPTOR and SPAG5; this complex is increased by oxidative stress. Interacts with ATXN2L. Interacts with STYXL1. Interacts with CGAS (via N-terminus); this interaction promotes the DNA-binding and activation of CGAS. Interacts (via C-terminus) with RIGI. Interacts with PABPC1. Interacts with QKI (isoforms QKI6 and QKI7); directing N(7)-methylguanine-containing mRNAs to stress granules. Mg(2+) is required as a cofactor. In terms of processing, phosphorylation of the acidic disordered region regulates stress granule assembly. RASA1-dependent phosphorylation of Ser-149 induces a conformational change that prevents self-association. Dephosphorylation after HRAS activation is required for stress granule assembly. Ser-149 phosphorylation induces partial nuclear localization. Post-translationally, arg-435 is dimethylated, probably to asymmetric dimethylarginine. Ubiquitinated by TRIM21 via 'Lys-63'-linked polyubiquitination in the NTF2 domain in response to heat shock, leading to stress granule disassembly: ubiquitination promotes interaction with the FAF2 adapter, followed by interaction with VCP, which extracts G3BP1 from stress granules, leading to stress granule disassembly. In case of prolonged stress, ubiquitination by TRIM21 leads to autophagy-dependent degradation of G3BP1 via recruitment of ubiquitinated G3BP1 by SQSTM1 and/or CALCOCO2 to autophagosomes.

It localises to the cytoplasm. Its subcellular location is the cytosol. The protein resides in the perikaryon. The protein localises to the stress granule. It is found in the nucleus. It catalyses the reaction ATP + H2O = ADP + phosphate + H(+). Under physiological conditions, G3BP1 adopts a compact state that is stabilized by intramolecular interactions between the RG-rich and the acidic regions that inhibit phase separation. Upon stress, polysomes disassemble and mRNAs are released in an unfolded protein-free state. Binding of unfolded mRNA to G3BP1 outcompetes the intramolecular interactions and RNA-bound G3BP1 adopts an expanded conformation in which the RG-rich region becomes exposed to engage in protein-protein and protein-RNA interactions, allowing physical cross-linking of RNA molecules to form protein-RNA condensates, leading to liquid-liquid phase separation (LLPS). Functionally, protein involved in various processes, such as stress granule formation and innate immunity. Plays an essential role in stress granule formation. Stress granules are membraneless compartments that store mRNAs and proteins, such as stalled translation pre-initiation complexes, in response to stress. Promotes formation of stress granules phase-separated membraneless compartment by undergoing liquid-liquid phase separation (LLPS) upon unfolded RNA-binding: functions as a molecular switch that triggers RNA-dependent LLPS in response to a rise in intracellular free RNA concentrations. Also acts as an ATP- and magnesium-dependent helicase: unwinds DNA/DNA, RNA/DNA, and RNA/RNA substrates with comparable efficiency. Acts unidirectionally by moving in the 5' to 3' direction along the bound single-stranded DNA. Unwinds preferentially partial DNA and RNA duplexes having a 17 bp annealed portion and either a hanging 3' tail or hanging tails at both 5'- and 3'-ends. Plays an essential role in innate immunity by promoting CGAS and RIGI activity. Participates in the DNA-triggered cGAS/STING pathway by promoting the DNA binding and activation of CGAS. Triggers the condensation of cGAS, a process probably linked to the formation of membrane-less organelles. Also enhances RIGI-induced type I interferon production probably by helping RIGI at sensing pathogenic RNA. May also act as a phosphorylation-dependent sequence-specific endoribonuclease in vitro: Cleaves exclusively between cytosine and adenine and cleaves MYC mRNA preferentially at the 3'-UTR. This is Ras GTPase-activating protein-binding protein 1 (G3BP1) from Pongo abelii (Sumatran orangutan).